A 136-amino-acid polypeptide reads, in one-letter code: Glycine-rich RNA-binding protein 4, mitochondrial (136 aa).

A mitochondrion-targeting transit peptide spans 1 to 33; sequence MAFCNKLSGILRQGVSQSSNGPVTSMLGSLRYM. Positions 35–113 constitute an RRM domain; the sequence is SKLFVGGLSW…RQIRVNLATE (79 aa). The residue at position 43 (Ser-43) is a Phosphoserine. Positions 113-136 are disordered; it reads ERSSAPRSSFGGGGGYGGGGGGGY. A compositionally biased stretch (gly residues) spans 122–136; it reads FGGGGGYGGGGGGGY. The glycine-rich (GR) required for cell-to-cell movement stretch occupies residues 123 to 135; it reads GGGGGYGGGGGGG.

The protein belongs to the GR-RBP family. In terms of assembly, binds to small phloem-mobile single-stranded RNAs (ss-sRNA, e.g. small interfering RNA (siRNA) and microRNA (miRNA)) in the phloeme exudate, including viral-derived sRNA (vsiRNA). As to expression, abundantly expressed in young plants, root tips, and flowers, but weakly in mature leaves and stems, implying highly expression in actively proliferating organs.

It localises to the mitochondrion. Its subcellular location is the secreted. Its function is as follows. Possibly has a role in RNA transcription or processing during stress. Binds sequence non-specifically to RNAs and DNAs. Mediates cell-to-cell trafficking of RNA interference (RNAi) signals (small RNAs (sRNA), e.g. small interfering RNA (siRNA) and microRNA (miRNA)) which regulate growth and development, as well as responses to environmental inputs, including pathogen attack; can compromise zucchini yellow mosaic virus (ZYMV) and tobacco rattle virus (TRV) infections at the early stage. The sequence is that of Glycine-rich RNA-binding protein 4, mitochondrial from Arabidopsis thaliana (Mouse-ear cress).